We begin with the raw amino-acid sequence, 193 residues long: Ribosomal RNA large subunit methyltransferase E (193 aa).

Positions 51, 53, 69, 85, and 108 each coordinate S-adenosyl-L-methionine. The Proton acceptor role is filled by lysine 148.

The protein belongs to the class I-like SAM-binding methyltransferase superfamily. RNA methyltransferase RlmE family.

The protein localises to the cytoplasm. The catalysed reaction is uridine(2552) in 23S rRNA + S-adenosyl-L-methionine = 2'-O-methyluridine(2552) in 23S rRNA + S-adenosyl-L-homocysteine + H(+). Its function is as follows. Specifically methylates the uridine in position 2552 of 23S rRNA at the 2'-O position of the ribose in the fully assembled 50S ribosomal subunit. The polypeptide is Ribosomal RNA large subunit methyltransferase E (Methanoregula boonei (strain DSM 21154 / JCM 14090 / 6A8)).